The sequence spans 517 residues: 2-isopropylmalate synthase (517 aa).

Residues 6 to 267 form the Pyruvate carboxyltransferase domain; the sequence is IIVFDTTLRD…YTTINTPEIY (262 aa). Positions 15, 201, 203, and 237 each coordinate Mn(2+). Residues 393-517 form a regulatory domain region; that stretch reads DLIGLQISDC…RLSKSSEHQV (125 aa).

Belongs to the alpha-IPM synthase/homocitrate synthase family. LeuA type 1 subfamily. As to quaternary structure, homodimer. It depends on Mn(2+) as a cofactor.

The protein resides in the cytoplasm. The catalysed reaction is 3-methyl-2-oxobutanoate + acetyl-CoA + H2O = (2S)-2-isopropylmalate + CoA + H(+). It functions in the pathway amino-acid biosynthesis; L-leucine biosynthesis; L-leucine from 3-methyl-2-oxobutanoate: step 1/4. Functionally, catalyzes the condensation of the acetyl group of acetyl-CoA with 3-methyl-2-oxobutanoate (2-ketoisovalerate) to form 3-carboxy-3-hydroxy-4-methylpentanoate (2-isopropylmalate). The chain is 2-isopropylmalate synthase from Aliarcobacter butzleri (strain RM4018) (Arcobacter butzleri).